The following is a 105-amino-acid chain: Pyrimidine/purine nucleoside phosphorylase (105 aa).

It belongs to the nucleoside phosphorylase PpnP family.

The enzyme catalyses a purine D-ribonucleoside + phosphate = a purine nucleobase + alpha-D-ribose 1-phosphate. It catalyses the reaction adenosine + phosphate = alpha-D-ribose 1-phosphate + adenine. It carries out the reaction cytidine + phosphate = cytosine + alpha-D-ribose 1-phosphate. The catalysed reaction is guanosine + phosphate = alpha-D-ribose 1-phosphate + guanine. The enzyme catalyses inosine + phosphate = alpha-D-ribose 1-phosphate + hypoxanthine. It catalyses the reaction thymidine + phosphate = 2-deoxy-alpha-D-ribose 1-phosphate + thymine. It carries out the reaction uridine + phosphate = alpha-D-ribose 1-phosphate + uracil. The catalysed reaction is xanthosine + phosphate = alpha-D-ribose 1-phosphate + xanthine. Its function is as follows. Catalyzes the phosphorolysis of diverse nucleosides, yielding D-ribose 1-phosphate and the respective free bases. Can use uridine, adenosine, guanosine, cytidine, thymidine, inosine and xanthosine as substrates. Also catalyzes the reverse reactions. The protein is Pyrimidine/purine nucleoside phosphorylase of Ralstonia pickettii (strain 12J).